We begin with the raw amino-acid sequence, 1270 residues long: DNA-directed RNA polymerase subunit beta (1270 aa).

Belongs to the RNA polymerase beta chain family. The RNAP catalytic core consists of 2 alpha, 1 beta, 1 beta' and 1 omega subunit. When a sigma factor is associated with the core the holoenzyme is formed, which can initiate transcription.

It catalyses the reaction RNA(n) + a ribonucleoside 5'-triphosphate = RNA(n+1) + diphosphate. Its function is as follows. DNA-dependent RNA polymerase catalyzes the transcription of DNA into RNA using the four ribonucleoside triphosphates as substrates. The sequence is that of DNA-directed RNA polymerase subunit beta from Bacteroides fragilis (strain ATCC 25285 / DSM 2151 / CCUG 4856 / JCM 11019 / LMG 10263 / NCTC 9343 / Onslow / VPI 2553 / EN-2).